The following is a 409-amino-acid chain: MDYNLALDKAIQKLHDEGRYRTFIDIEREKGAFPKAQWNRPDGGKQDITVWCGNDYLGMGQHPVVLAAMHEALEAVGAGSGGTRNISGTTAYHRRLEAEIADLHGKEAALVFSSAYIANDATLSTLRVLFPGLIIYSDSLNHASMIEGIKRNAGPKRIFRHNDVAHLRELIAADDPAAPKLIAFESVYSMDGDFGPIKEICDIADEFGALTYIDEVHAVGMYGPRGAGVAERDGLMHRIDIFNGTLAKAYGVFGGYIAASAKMVDAVRSYAPGFIFSTSLPPAIAAGAQASIAFLKTAEGQKLRDAQQMHAKVLKMRLKALGMPIIDHGSHIVPVVIGDPVHTKAVSDMLLSDYGVYVQPINFPTVPRGTERLRFTPSPVHDLKQIDGLVHAMDLLWARCALNRAEASA.

Residues Arg21, Ser137, and Lys156 each contribute to the succinyl-CoA site. Pyridoxal 5'-phosphate-binding residues include Ser189, His217, and Thr245. The active site involves Lys248. Lys248 bears the N6-(pyridoxal phosphate)lysine mark. The pyridoxal 5'-phosphate site is built by Ser277 and Thr278. Residue Thr365 coordinates succinyl-CoA.

This sequence belongs to the class-II pyridoxal-phosphate-dependent aminotransferase family. In terms of assembly, homodimer. Pyridoxal 5'-phosphate is required as a cofactor.

The enzyme catalyses succinyl-CoA + glycine + H(+) = 5-aminolevulinate + CO2 + CoA. Its pathway is porphyrin-containing compound metabolism; protoporphyrin-IX biosynthesis; 5-aminolevulinate from glycine: step 1/1. The polypeptide is 5-aminolevulinate synthase (hemA) (Rhodobacter capsulatus (strain ATCC BAA-309 / NBRC 16581 / SB1003)).